A 31-amino-acid polypeptide reads, in one-letter code: Antifungal protein 1 (31 aa).

2 stretches are compositionally biased toward basic and acidic residues: residues 1–10 (PGAGSQEERM) and 18–31 (DFSHEERFLSMVRE). The disordered stretch occupies residues 1–31 (PGAGSQEERMQGQMEGQDFSHEERFLSMVRE).

As to quaternary structure, heterodimer; disulfide-linked. Disulfide bonds.

In terms of biological role, has antifungal activity against C.gloeosporioides but not against B.cinerea and Fusarium sp. or against various yeasts. Has no antibacterial activity. In Passiflora alata (Winged-stem passion flower), this protein is Antifungal protein 1.